We begin with the raw amino-acid sequence, 340 residues long: Ribonucleoside-diphosphate reductase small subunit (340 aa).

Fe cation is bound by residues aspartate 94, glutamate 124, and histidine 127. Tyrosine 131 is an active-site residue. A helical transmembrane segment spans residues 180–200 (FILMILIEGIFFAASFAAIAY). Fe cation contacts are provided by glutamate 187, glutamate 221, and histidine 224.

The protein belongs to the ribonucleoside diphosphate reductase small chain family. In terms of assembly, heterotetramer composed of a homodimer of the large subunit (R1) and a homodimer of the small subunit (R2). Larger multisubunit protein complex are also active, composed of (R1)n(R2)n. Requires Fe cation as cofactor.

The protein localises to the host membrane. The catalysed reaction is a 2'-deoxyribonucleoside 5'-diphosphate + [thioredoxin]-disulfide + H2O = a ribonucleoside 5'-diphosphate + [thioredoxin]-dithiol. Functionally, ribonucleoside-diphosphate reductase holoenzyme provides the precursors necessary for viral DNA synthesis. Allows virus growth in non-dividing cells, as well as reactivation from latency in infected hosts. Catalyzes the biosynthesis of deoxyribonucleotides from the corresponding ribonucleotides. The protein is Ribonucleoside-diphosphate reductase small subunit of Human herpesvirus 1 (strain KOS) (HHV-1).